The sequence spans 600 residues: Pentatricopeptide repeat-containing protein At3g29230 (600 aa).

PPR repeat units follow at residues Asp-50–Pro-80, Asn-81–Ala-115, Asp-116–Ser-150, Asp-151–Arg-183, Asp-184–Ser-218, Trp-219–Arg-245, Asn-246–Pro-276, Asn-279–Phe-313, Asp-314–Ser-348, Asn-349–Lys-379, Asp-380–Pro-414, Asp-415–Val-445, and Gln-451–Glu-481. The type E motif stretch occupies residues Ile-486–Glu-561. Residues Asp-562–Asp-592 are type E(+) motif.

This sequence belongs to the PPR family. PCMP-E subfamily.

This Arabidopsis thaliana (Mouse-ear cress) protein is Pentatricopeptide repeat-containing protein At3g29230 (PCMP-E27).